The chain runs to 282 residues: Probable ribosomal RNA small subunit methyltransferase A (282 aa).

S-adenosyl-L-methionine-binding residues include H24, L26, G51, E72, D100, and N115.

This sequence belongs to the class I-like SAM-binding methyltransferase superfamily. rRNA adenine N(6)-methyltransferase family. RsmA subfamily.

Its subcellular location is the cytoplasm. Its function is as follows. Specifically dimethylates two adjacent adenosines in the loop of a conserved hairpin near the 3'-end of 16S rRNA in the 30S particle. May play a critical role in biogenesis of 30S subunits. The protein is Probable ribosomal RNA small subunit methyltransferase A of Halobacterium salinarum (strain ATCC 29341 / DSM 671 / R1).